The chain runs to 112 residues: T cell receptor alpha variable 41 (112 aa).

The signal sequence occupies residues 1–21; sequence MVKIRQFLLAILWLQLSCVSA. Positions 24 to 112 constitute an Ig-like domain; the sequence is NEVEQSPQNL…DSAVYICAVR (89 aa). Residues N32 and N44 are each glycosylated (N-linked (GlcNAc...) asparagine). A disulfide bridge connects residues C45 and C109.

Alpha-beta TR is a heterodimer composed of an alpha and beta chain; disulfide-linked. The alpha-beta TR is associated with the transmembrane signaling CD3 coreceptor proteins to form the TR-CD3 (TcR or TCR). The assembly of alpha-beta TR heterodimers with CD3 occurs in the endoplasmic reticulum where a single alpha-beta TR heterodimer associates with one CD3D-CD3E heterodimer, one CD3G-CD3E heterodimer and one CD247 homodimer forming a stable octameric structure. CD3D-CD3E and CD3G-CD3E heterodimers preferentially associate with TR alpha and TR beta chains, respectively. The association of the CD247 homodimer is the last step of TcR assembly in the endoplasmic reticulum and is required for transport to the cell surface.

The protein resides in the cell membrane. V region of the variable domain of T cell receptor (TR) alpha chain that participates in the antigen recognition. Alpha-beta T cell receptors are antigen specific receptors which are essential to the immune response and are present on the cell surface of T lymphocytes. Recognize peptide-major histocompatibility (MH) (pMH) complexes that are displayed by antigen presenting cells (APC), a prerequisite for efficient T cell adaptive immunity against pathogens. Binding of alpha-beta TR to pMH complex initiates TR-CD3 clustering on the cell surface and intracellular activation of LCK that phosphorylates the ITAM motifs of CD3G, CD3D, CD3E and CD247 enabling the recruitment of ZAP70. In turn ZAP70 phosphorylates LAT, which recruits numerous signaling molecules to form the LAT signalosome. The LAT signalosome propagates signal branching to three major signaling pathways, the calcium, the mitogen-activated protein kinase (MAPK) kinase and the nuclear factor NF-kappa-B (NF-kB) pathways, leading to the mobilization of transcription factors that are critical for gene expression and essential for T cell growth and differentiation. The T cell repertoire is generated in the thymus, by V-(D)-J rearrangement. This repertoire is then shaped by intrathymic selection events to generate a peripheral T cell pool of self-MH restricted, non-autoaggressive T cells. Post-thymic interaction of alpha-beta TR with the pMH complexes shapes TR structural and functional avidity. In Homo sapiens (Human), this protein is T cell receptor alpha variable 41.